We begin with the raw amino-acid sequence, 257 residues long: Beta-fibrinogenase mucrofibrase-5 (257 aa).

An N-terminal signal peptide occupies residues 1–18 (MVLIRVLANLLILQLSYA). Residues 19-24 (QKSSEL) constitute a propeptide that is removed on maturation. One can recognise a Peptidase S1 domain in the interval 25–248 (IIGGDECNIN…HLDWIKGIIA (224 aa)). 6 cysteine pairs are disulfide-bonded: Cys31/Cys162, Cys49/Cys65, Cys97/Cys255, Cys141/Cys209, Cys173/Cys188, and Cys199/Cys224. Catalysis depends on His64, which acts as the Charge relay system. Asn102 carries N-linked (GlcNAc...) asparagine glycosylation. Asp109 serves as the catalytic Charge relay system. The active-site Charge relay system is the Ser203.

The protein belongs to the peptidase S1 family. Snake venom subfamily. As to quaternary structure, monomer. Expressed by the venom gland.

It localises to the secreted. Its function is as follows. Snake venom serine protease with strong beta-fibrinogenolytic activities, angiotensin I (AGT)-degrading activities and strong kallikrein-like activities in vitro, releasing bradykinin from kininogen (KNG1). Intravenous injection mildly lowers blood pressure in experimental rats, which may be explained by the action on angiotensin I and kininogen. Exhibits amidase activity against N-benzoyl-Pro-Phe-Arg-p-nitroanilide in vitro. The chain is Beta-fibrinogenase mucrofibrase-5 from Protobothrops mucrosquamatus (Taiwan habu).